Consider the following 305-residue polypeptide: Porphobilinogen deaminase (305 aa).

The residue at position 241 (Cys-241) is an S-(dipyrrolylmethanemethyl)cysteine.

Belongs to the HMBS family. As to quaternary structure, monomer. It depends on dipyrromethane as a cofactor.

It catalyses the reaction 4 porphobilinogen + H2O = hydroxymethylbilane + 4 NH4(+). Its pathway is porphyrin-containing compound metabolism; protoporphyrin-IX biosynthesis; coproporphyrinogen-III from 5-aminolevulinate: step 2/4. In terms of biological role, tetrapolymerization of the monopyrrole PBG into the hydroxymethylbilane pre-uroporphyrinogen in several discrete steps. The sequence is that of Porphobilinogen deaminase from Exiguobacterium sp. (strain ATCC BAA-1283 / AT1b).